The sequence spans 210 residues: MARKGILGKKVGMTQVFTDNGELVPVTVVDVTPNVVMQVKTVESDGYEAVQLGYGDMREVLTNKPSVGHAKKADTTPKRFVREIRDVALSDYEIGSEVKADEFAAGDIVDVTGTSKGHGYQGNIKKDGQSRGPMAHGSRYHRRPGSLGAIINKVFKGKKLPGRMGNHTRTMQNLQVVAADTEHNVLLIKGNVPGANKSFVTIRSAVKAAK.

Residues 119–143 (GYQGNIKKDGQSRGPMAHGSRYHRR) form a disordered region.

It belongs to the universal ribosomal protein uL3 family. Part of the 50S ribosomal subunit. Forms a cluster with proteins L14 and L19.

Its function is as follows. One of the primary rRNA binding proteins, it binds directly near the 3'-end of the 23S rRNA, where it nucleates assembly of the 50S subunit. The chain is Large ribosomal subunit protein uL3 from Lacticaseibacillus casei (strain BL23) (Lactobacillus casei).